Here is a 163-residue protein sequence, read N- to C-terminus: Probable protein tyrosine phosphatase type IVA B (163 aa).

Positions 10–161 constitute a Tyrosine-protein phosphatase domain; it reads TIIESSTHKF…YKASKKAGCK (152 aa). C49 and C104 form a disulfide bridge. D70 (proton donor) is an active-site residue. Catalysis depends on C104, which acts as the Phosphocysteine intermediate. 105–110 contacts phosphate; that stretch reads IAGLGR. Residue R110 coordinates substrate. C160 bears the Cysteine methyl ester mark. Residue C160 is the site of S-farnesyl cysteine attachment. Positions 161–163 are cleaved as a propeptide — removed in mature form; sequence KIM.

It belongs to the protein-tyrosine phosphatase family.

It is found in the membrane. The catalysed reaction is O-phospho-L-tyrosyl-[protein] + H2O = L-tyrosyl-[protein] + phosphate. The polypeptide is Probable protein tyrosine phosphatase type IVA B (Dictyostelium discoideum (Social amoeba)).